The chain runs to 31 residues: Cyclotide vinc-B (31 aa).

Positions 1–31 (GSIPACGESCFKGKCYTPGCTCSKYPLCAKN) form a cross-link, cyclopeptide (Gly-Asn). Disulfide bonds link Cys6–Cys20, Cys10–Cys22, and Cys15–Cys28.

Belongs to the cyclotide family. Post-translationally, this is a cyclic peptide.

Its function is as follows. Probably participates in a plant defense mechanism. The chain is Cyclotide vinc-B from Viola inconspicua.